The following is a 359-amino-acid chain: UDP-3-O-acylglucosamine N-acyltransferase (359 aa).

Catalysis depends on His-248, which acts as the Proton acceptor.

It belongs to the transferase hexapeptide repeat family. LpxD subfamily. In terms of assembly, homotrimer.

The enzyme catalyses a UDP-3-O-[(3R)-3-hydroxyacyl]-alpha-D-glucosamine + a (3R)-hydroxyacyl-[ACP] = a UDP-2-N,3-O-bis[(3R)-3-hydroxyacyl]-alpha-D-glucosamine + holo-[ACP] + H(+). It participates in bacterial outer membrane biogenesis; LPS lipid A biosynthesis. Catalyzes the N-acylation of UDP-3-O-acylglucosamine using 3-hydroxyacyl-ACP as the acyl donor. Is involved in the biosynthesis of lipid A, a phosphorylated glycolipid that anchors the lipopolysaccharide to the outer membrane of the cell. This is UDP-3-O-acylglucosamine N-acyltransferase from Chlamydia felis (strain Fe/C-56) (Chlamydophila felis).